Here is a 127-residue protein sequence, read N- to C-terminus: Large ribosomal subunit protein bL17 (127 aa).

This sequence belongs to the bacterial ribosomal protein bL17 family. Part of the 50S ribosomal subunit. Contacts protein L32.

The polypeptide is Large ribosomal subunit protein bL17 (Chromohalobacter salexigens (strain ATCC BAA-138 / DSM 3043 / CIP 106854 / NCIMB 13768 / 1H11)).